The sequence spans 152 residues: Large ribosomal subunit protein uL15 (152 aa).

Positions 1–57 are disordered; the sequence is MTSTLNTLKSNSGSRKKKLRKGRGIAAGQGASCGFGMRGQKSRSGRPTRPGFEGGQM. Over residues 14–23 the composition is skewed to basic residues; sequence SRKKKLRKGR. The span at 25–37 shows a compositional bias: gly residues; sequence IAAGQGASCGFGM.

It belongs to the universal ribosomal protein uL15 family. As to quaternary structure, part of the 50S ribosomal subunit.

In terms of biological role, binds to the 23S rRNA. This chain is Large ribosomal subunit protein uL15, found in Prochlorococcus marinus (strain MIT 9215).